The primary structure comprises 484 residues: Glutamate--tRNA ligase (484 aa).

A 'HIGH' region motif is present at residues 11-21; it reads PSPTGLLHIGN. The short motif at 255–259 is the 'KMSKS' region element; sequence KLSKR. Lysine 258 contributes to the ATP binding site.

This sequence belongs to the class-I aminoacyl-tRNA synthetase family. Glutamate--tRNA ligase type 1 subfamily. In terms of assembly, monomer.

It localises to the cytoplasm. It carries out the reaction tRNA(Glu) + L-glutamate + ATP = L-glutamyl-tRNA(Glu) + AMP + diphosphate. Functionally, catalyzes the attachment of glutamate to tRNA(Glu) in a two-step reaction: glutamate is first activated by ATP to form Glu-AMP and then transferred to the acceptor end of tRNA(Glu). In Streptococcus suis (strain 98HAH33), this protein is Glutamate--tRNA ligase.